The primary structure comprises 163 residues: Anaerobic nitrite reductase HB1 (163 aa).

The region spanning 8 to 157 is the Globin domain; sequence VFTEEQEALV…LVAAIKIEMK (150 aa). The Homodimerization motif lies at 41 to 45; the sequence is EIAPS. Heme b is bound by residues S51, K65, H69, K99, T103, and H104. A Homodimerization motif is present at residues 111–123; sequence DEHFEVTKFALLE.

It belongs to the plant globin family. As to quaternary structure, homodimer. Heme b is required as a cofactor.

Its subcellular location is the cytoplasm. It localises to the nucleus. It catalyses the reaction Fe(III)-heme b-[protein] + nitric oxide + H2O = Fe(II)-heme b-[protein] + nitrite + 2 H(+). Phytoglobin that reduces nitrite to nitric oxide (NO) under anoxic conditions (e.g. during flooding or in waterlogged soil). May not function as an oxygen storage or transport protein. Has an unusually high affinity for O(2) through an hexacoordinate heme iron because of a very low dissociation constant. This Gossypium hirsutum (Upland cotton) protein is Anaerobic nitrite reductase HB1.